We begin with the raw amino-acid sequence, 338 residues long: UPF0284 protein PAE0372 (338 aa).

It belongs to the UPF0284 family.

The chain is UPF0284 protein PAE0372 from Pyrobaculum aerophilum (strain ATCC 51768 / DSM 7523 / JCM 9630 / CIP 104966 / NBRC 100827 / IM2).